The primary structure comprises 132 residues: Bombinin-like peptides (132 aa).

Positions Met-1–Ala-18 are cleaved as a signal peptide. Positions Arg-19 to Ile-42 are excised as a propeptide. Phe-68 is subject to Phenylalanine amide. Positions Thr-72–Glu-112 are excised as a propeptide. At Leu-131 the chain carries Leucine amide.

This sequence belongs to the bombinin family. Expressed by the skin glands.

It localises to the secreted. In terms of biological role, has antimicrobial activity against Gram-negative bacterium E.coli (MIC=26.3 uM), Gram-positive bacterium S.aureus (MIC=26.3 uM) and yeast C.albicans (MIC=52.5 uM). Has moderate hemolytic activity towards human erythrocytes at a concentration of 52.2 uM. Its function is as follows. Has no antimicrobial activity at concentrations up to 161 uM. Has moderate hemolytic activity towards human erythrocytes at a concentration of 40.3 uM. In Bombina orientalis (Oriental fire-bellied toad), this protein is Bombinin-like peptides.